Consider the following 459-residue polypeptide: Phosphoglucosamine mutase (459 aa).

Catalysis depends on Ser-102, which acts as the Phosphoserine intermediate. Residues Ser-102, Asp-243, Asp-245, and Asp-247 each coordinate Mg(2+). Position 102 is a phosphoserine (Ser-102).

This sequence belongs to the phosphohexose mutase family. Requires Mg(2+) as cofactor. Activated by phosphorylation.

It carries out the reaction alpha-D-glucosamine 1-phosphate = D-glucosamine 6-phosphate. Catalyzes the conversion of glucosamine-6-phosphate to glucosamine-1-phosphate. The sequence is that of Phosphoglucosamine mutase from Bartonella henselae (strain ATCC 49882 / DSM 28221 / CCUG 30454 / Houston 1) (Rochalimaea henselae).